A 284-amino-acid chain; its full sequence is 2-dehydro-3-deoxyphosphooctonate aldolase (284 aa).

The protein belongs to the KdsA family.

The protein localises to the cytoplasm. It catalyses the reaction D-arabinose 5-phosphate + phosphoenolpyruvate + H2O = 3-deoxy-alpha-D-manno-2-octulosonate-8-phosphate + phosphate. It functions in the pathway carbohydrate biosynthesis; 3-deoxy-D-manno-octulosonate biosynthesis; 3-deoxy-D-manno-octulosonate from D-ribulose 5-phosphate: step 2/3. The protein operates within bacterial outer membrane biogenesis; lipopolysaccharide biosynthesis. In Histophilus somni (strain 2336) (Haemophilus somnus), this protein is 2-dehydro-3-deoxyphosphooctonate aldolase.